We begin with the raw amino-acid sequence, 1222 residues long: ATP-dependent helicase/nuclease subunit A (1222 aa).

In terms of domain architecture, UvrD-like helicase ATP-binding spans 39–495; it reads QKRTAQQIEA…ILLKENFRSQ (457 aa). An ATP-binding site is contributed by 60–67; that stretch reads ASAGSGKT. Residues 524–810 enclose the UvrD-like helicase C-terminal domain; the sequence is QLIAGSHAQT…NLMTIHKSKG (287 aa).

It belongs to the helicase family. AddA subfamily. Heterodimer of AddA and AddB/RexB. It depends on Mg(2+) as a cofactor.

The catalysed reaction is Couples ATP hydrolysis with the unwinding of duplex DNA by translocating in the 3'-5' direction.. It catalyses the reaction ATP + H2O = ADP + phosphate + H(+). In terms of biological role, the heterodimer acts as both an ATP-dependent DNA helicase and an ATP-dependent, dual-direction single-stranded exonuclease. Recognizes the chi site generating a DNA molecule suitable for the initiation of homologous recombination. The AddA nuclease domain is required for chi fragment generation; this subunit has the helicase and 3' -&gt; 5' nuclease activities. This is ATP-dependent helicase/nuclease subunit A from Streptococcus pyogenes serotype M4 (strain MGAS10750).